Reading from the N-terminus, the 320-residue chain is tRNA U34 carboxymethyltransferase (320 aa).

Carboxy-S-adenosyl-L-methionine-binding positions include lysine 89, tryptophan 103, lysine 108, glycine 128, 150 to 152 (DPT), 179 to 180 (IE), methionine 194, tyrosine 198, and arginine 313.

The protein belongs to the class I-like SAM-binding methyltransferase superfamily. CmoB family. Homotetramer.

It carries out the reaction carboxy-S-adenosyl-L-methionine + 5-hydroxyuridine(34) in tRNA = 5-carboxymethoxyuridine(34) in tRNA + S-adenosyl-L-homocysteine + H(+). Functionally, catalyzes carboxymethyl transfer from carboxy-S-adenosyl-L-methionine (Cx-SAM) to 5-hydroxyuridine (ho5U) to form 5-carboxymethoxyuridine (cmo5U) at position 34 in tRNAs. The sequence is that of tRNA U34 carboxymethyltransferase from Actinobacillus pleuropneumoniae serotype 7 (strain AP76).